We begin with the raw amino-acid sequence, 318 residues long: Methionyl-tRNA formyltransferase (318 aa).

112–115 lines the (6S)-5,6,7,8-tetrahydrofolate pocket; it reads SLLP.

This sequence belongs to the Fmt family.

It carries out the reaction L-methionyl-tRNA(fMet) + (6R)-10-formyltetrahydrofolate = N-formyl-L-methionyl-tRNA(fMet) + (6S)-5,6,7,8-tetrahydrofolate + H(+). Attaches a formyl group to the free amino group of methionyl-tRNA(fMet). The formyl group appears to play a dual role in the initiator identity of N-formylmethionyl-tRNA by promoting its recognition by IF2 and preventing the misappropriation of this tRNA by the elongation apparatus. This Mycobacterium leprae (strain Br4923) protein is Methionyl-tRNA formyltransferase.